The primary structure comprises 801 residues: Mitochondrial intermediate peptidase (801 aa).

Residues 1–41 (MKDQLLVPLRRRPWTCQKCLQRLQLPRHQTRRSFETAASPF) constitute a mitochondrion transit peptide. His-564 is a binding site for Zn(2+). The active site involves Glu-565. Positions 568 and 571 each coordinate Zn(2+).

It belongs to the peptidase M3 family. It depends on Zn(2+) as a cofactor.

The protein localises to the mitochondrion matrix. The catalysed reaction is Release of an N-terminal octapeptide as second stage of processing of some proteins imported into the mitochondrion.. Its function is as follows. Cleaves proteins, imported into the mitochondrion, to their mature size. While most mitochondrial precursor proteins are processed to the mature form in one step by mitochondrial processing peptidase (MPP), the sequential cleavage by MIP of an octapeptide after initial processing by MPP is a required step for a subgroup of nuclear-encoded precursor proteins destined for the matrix or the inner membrane. The protein is Mitochondrial intermediate peptidase (oct1) of Aspergillus fumigatus (strain CBS 144.89 / FGSC A1163 / CEA10) (Neosartorya fumigata).